Consider the following 159-residue polypeptide: Small ribosomal subunit protein uS5c (159 aa).

In terms of domain architecture, S5 DRBM spans 17-80; that stretch reads WEERVVSVQR…TDGKKNVITV (64 aa).

This sequence belongs to the universal ribosomal protein uS5 family. As to quaternary structure, part of the 30S ribosomal subunit. Contacts protein S4.

The protein resides in the plastid. The protein localises to the chloroplast. In terms of biological role, with S4 and S12 plays an important role in translational accuracy. This chain is Small ribosomal subunit protein uS5c (rps5), found in Emiliania huxleyi (Coccolithophore).